Here is a 113-residue protein sequence, read N- to C-terminus: MEAKAVARYIRISPRKVRQVVDLIRGKKLNEALAILRYTPKRASAVVAKVVRSAAANAENNLQMDRDELFIKACYVDQGPTYKRYMPRAFGRADVMRKRTSHITVVVSDKKEG.

The protein belongs to the universal ribosomal protein uL22 family. In terms of assembly, part of the 50S ribosomal subunit.

This protein binds specifically to 23S rRNA; its binding is stimulated by other ribosomal proteins, e.g. L4, L17, and L20. It is important during the early stages of 50S assembly. It makes multiple contacts with different domains of the 23S rRNA in the assembled 50S subunit and ribosome. In terms of biological role, the globular domain of the protein is located near the polypeptide exit tunnel on the outside of the subunit, while an extended beta-hairpin is found that lines the wall of the exit tunnel in the center of the 70S ribosome. The polypeptide is Large ribosomal subunit protein uL22 (Pelotomaculum thermopropionicum (strain DSM 13744 / JCM 10971 / SI)).